The sequence spans 341 residues: tRNA N6-adenosine threonylcarbamoyltransferase (341 aa).

Fe cation contacts are provided by histidine 111 and histidine 115. Substrate-binding positions include 134-138, aspartate 167, glycine 180, and asparagine 276; that span reads LVSGG. Aspartate 304 contacts Fe cation.

It belongs to the KAE1 / TsaD family. Requires Fe(2+) as cofactor.

It localises to the cytoplasm. It catalyses the reaction L-threonylcarbamoyladenylate + adenosine(37) in tRNA = N(6)-L-threonylcarbamoyladenosine(37) in tRNA + AMP + H(+). Functionally, required for the formation of a threonylcarbamoyl group on adenosine at position 37 (t(6)A37) in tRNAs that read codons beginning with adenine. Is involved in the transfer of the threonylcarbamoyl moiety of threonylcarbamoyl-AMP (TC-AMP) to the N6 group of A37, together with TsaE and TsaB. TsaD likely plays a direct catalytic role in this reaction. The sequence is that of tRNA N6-adenosine threonylcarbamoyltransferase from Pseudomonas syringae pv. tomato (strain ATCC BAA-871 / DC3000).